The chain runs to 682 residues: Methionine--tRNA ligase (682 aa).

The short motif at 14–24 is the 'HIGH' region element; it reads PYANGSIHLGH. 4 residues coordinate Zn(2+): cysteine 145, cysteine 148, cysteine 158, and cysteine 161. The 'KMSKS' region signature appears at 331-335; sequence KMSKS. Position 334 (lysine 334) interacts with ATP. Residues 580–682 enclose the tRNA-binding domain; that stretch reads AFAAIDLRVA…SGARPGQRIK (103 aa).

It belongs to the class-I aminoacyl-tRNA synthetase family. MetG type 1 subfamily. In terms of assembly, homodimer. The cofactor is Zn(2+).

It localises to the cytoplasm. It carries out the reaction tRNA(Met) + L-methionine + ATP = L-methionyl-tRNA(Met) + AMP + diphosphate. Functionally, is required not only for elongation of protein synthesis but also for the initiation of all mRNA translation through initiator tRNA(fMet) aminoacylation. The protein is Methionine--tRNA ligase of Pseudomonas syringae pv. syringae (strain B728a).